Consider the following 272-residue polypeptide: Catechol O-methyltransferase (272 aa).

At 1–6 the chain is on the cytoplasmic side; that stretch reads MLEAPP. The helical; Signal-anchor for type II membrane protein transmembrane segment at 7-27 threads the bilayer; the sequence is LLLVAGGVGLALLALRWLATT. The Extracellular segment spans residues 28 to 272; it reads DLQFFGRAFI…YKGLSGPARP (245 aa). S-adenosyl-L-methionine contacts are provided by residues Val93, Glu115, Ser123, Glu141, 168–171, Ser170, and Asp192; that span reads GASQ. Residue Asp192 coordinates Mg(2+). A substrate-binding site is contributed by Lys195. Mg(2+)-binding residues include Asp220 and Asn221. Asn221 and Glu250 together coordinate substrate. Ser267 carries the post-translational modification Phosphoserine.

It belongs to the class I-like SAM-binding methyltransferase superfamily. Cation-dependent O-methyltransferase family. Mg(2+) serves as cofactor.

Its subcellular location is the cytoplasm. The protein resides in the cell membrane. The catalysed reaction is a catechol + S-adenosyl-L-methionine = a guaiacol + S-adenosyl-L-homocysteine + H(+). It carries out the reaction 2-hydroxyestrone + S-adenosyl-L-methionine = 2-hydroxy-3-methoxy-estrone + S-adenosyl-L-homocysteine + H(+). The enzyme catalyses 4-hydroxyestrone + S-adenosyl-L-methionine = 4-methoxyestrone + S-adenosyl-L-homocysteine + H(+). It catalyses the reaction 2-hydroxyestrone + S-adenosyl-L-methionine = 2-methoxyestrone + S-adenosyl-L-homocysteine + H(+). The catalysed reaction is 4-hydroxy-17beta-estradiol + S-adenosyl-L-methionine = 4-methoxy-17beta-estradiol + S-adenosyl-L-homocysteine + H(+). It carries out the reaction 2-hydroxy-17beta-estradiol + S-adenosyl-L-methionine = 2-hydroxy-3-methoxy-17beta-estradiol + S-adenosyl-L-homocysteine + H(+). The enzyme catalyses 2-hydroxy-17beta-estradiol + S-adenosyl-L-methionine = 2-methoxy-17beta-estradiol + S-adenosyl-L-homocysteine + H(+). Functionally, catalyzes the O-methylation, and thereby the inactivation, of catecholamine neurotransmitters and catechol hormones. Also shortens the biological half-lives of certain neuroactive drugs, like L-DOPA, alpha-methyl DOPA and isoproterenol. This chain is Catechol O-methyltransferase (COMT), found in Bos taurus (Bovine).